We begin with the raw amino-acid sequence, 629 residues long: Protein fem-1 homolog B (629 aa).

6 ANK repeats span residues 47-77, 89-118, 122-151, 155-184, 188-217, and 220-250; these read QRST…DVQQ, DGAT…NVNH, TNST…NISI, YDNT…DPNA, CGAT…AMVV, and HGMT…DAKS. One copy of the TPR repeat lies at 346 to 379; sequence SHPIIYRGAVYADNMQFEQCIKLWLHALQLRQKG. ANK repeat units lie at residues 485-529 and 533-570; these read EGGS…NVNA and MGNS…HTDM.

The protein belongs to the fem-1 family. In terms of assembly, component of a CRL2 E3 ubiquitin-protein ligase complex, also named ECS (Elongin BC-CUL2/5-SOCS-box protein) complex.

It is found in the cytoplasm. The protein localises to the nucleus. It functions in the pathway protein modification; protein ubiquitination. Substrate-recognition component of a Cul2-RING (CRL2) E3 ubiquitin-protein ligase complex of the DesCEND (destruction via C-end degrons) pathway, which recognizes a C-degron located at the extreme C terminus of target proteins, leading to their ubiquitination and degradation. The C-degron recognized by the DesCEND pathway is usually a motif of less than ten residues and can be present in full-length proteins, truncated proteins or proteolytically cleaved forms. The CRL2(FEM1B) complex specifically recognizes proteins ending with -Gly-Leu-Asp-Arg, leading to their ubiquitination and degradation. This chain is Protein fem-1 homolog B, found in Xenopus laevis (African clawed frog).